Reading from the N-terminus, the 336-residue chain is Immune-associated nucleotide-binding protein 6 (336 aa).

In terms of domain architecture, AIG1-type G spans 33–241; that stretch reads EPVKNVVLVG…FTDTMHRRIQ (209 aa). The tract at residues 42 to 49 is G1; the sequence is GRTGNGKS. GTP contacts are provided by residues 42-50 and Ser-63; that span reads GRTGNGKSA. A G2 region spans residues 69-73; sequence GVTTR. Positions 91 to 94 are G3; it reads DTPG. The segment at 161–164 is G4; it reads TCGD. The tract at residues 200–202 is G5; that stretch reads DNR. Asn-201 provides a ligand contact to GTP. Positions 237-270 form a coiled coil; sequence HRRIQEEAARVKREEKEIEEKNIADEEKAALKKQ.

The protein belongs to the TRAFAC class TrmE-Era-EngA-EngB-Septin-like GTPase superfamily. AIG1/Toc34/Toc159-like paraseptin GTPase family. IAN subfamily. Mostly expressed in pollen. Also detected in lateral roots and radicles.

The sequence is that of Immune-associated nucleotide-binding protein 6 from Arabidopsis thaliana (Mouse-ear cress).